Reading from the N-terminus, the 20-residue chain is Collagenolytic protease 28 kDa (20 aa).

The 20-residue stretch at 1-20 (IVGGQEASPGSWPXQVGLFF) folds into the Peptidase S1 domain.

It belongs to the peptidase S1 family.

It carries out the reaction Hydrolysis of proteins, with broad specificity for peptide bonds. Native collagen is cleaved about 75% of the length of the molecule from the N-terminus. Low activity on small molecule substrates of both trypsin and chymotrypsin.. Its function is as follows. This enzyme is a serine protease capable of degrading the native triple helix of collagen. This chain is Collagenolytic protease 28 kDa, found in Paralithodes camtschaticus (Red king crab).